The primary structure comprises 312 residues: Pyridoxal kinase (312 aa).

Met1 bears the N-acetylmethionine mark. The pyridoxal 5'-phosphate site is built by Ser12 and Thr47. Residues Ser12 and Thr47 each contribute to the pyridoxamine site. Residue Ser59 is modified to Phosphoserine. Residue Asp113 participates in K(+) binding. Tyr127 contacts pyridoxal 5'-phosphate. A K(+)-binding site is contributed by Thr148. Position 150 (Asn150) interacts with ADP. An ATP-binding site is contributed by Asn150. Ser164 is modified (phosphoserine). Thr186 lines the K(+) pocket. Residue 186–187 participates in ADP binding; it reads TS. 186–187 serves as a coordination point for ATP; the sequence is TS. A Phosphoserine modification is found at Ser213. Residues 223 to 226 and 233 to 234 each bind ADP; these read MHKV and TG. ATP-binding positions include 223 to 226 and 233 to 234; these read MHKV and TG. 232–235 lines the pyridoxal 5'-phosphate pocket; it reads GTGD. Asp235 lines the pyridoxamine pocket. Asp235 acts as the Proton acceptor in catalysis. Position 285 is a phosphoserine (Ser285).

The protein belongs to the pyridoxine kinase family. Homodimer. The cofactor is Zn(2+). Mg(2+) is required as a cofactor. Ubiquitous.

The protein resides in the cytoplasm. It is found in the cytosol. It catalyses the reaction pyridoxal + ATP = pyridoxal 5'-phosphate + ADP + H(+). The catalysed reaction is pyridoxamine + ATP = pyridoxamine 5'-phosphate + ADP + H(+). It carries out the reaction pyridoxine + ATP = pyridoxine 5'-phosphate + ADP + H(+). The protein operates within cofactor metabolism; pyridoxal 5'-phosphate salvage; pyridoxal 5'-phosphate from pyridoxal: step 1/1. It participates in cofactor metabolism; pyridoxal 5'-phosphate salvage; pyridoxine 5'-phosphate from pyridoxine: step 1/1. Its pathway is cofactor metabolism; pyridoxal 5'-phosphate salvage; pyridoxamine 5'-phosphate from pyridoxamine: step 1/1. With respect to regulation, activated by K(+). Activity is increased in the presence of Na(+). Functionally, catalyzes the phosphorylation of the dietary vitamin B6 vitamers pyridoxal (PL), pyridoxine (PN) and pyridoxamine (PM) to form pyridoxal 5'-phosphate (PLP), pyridoxine 5'-phosphate (PNP) and pyridoxamine 5'-phosphate (PMP), respectively. PLP is the active form of vitamin B6, and acts as a cofactor for over 140 different enzymatic reactions. The sequence is that of Pyridoxal kinase (PDXK) from Ovis aries (Sheep).